Here is a 125-residue protein sequence, read N- to C-terminus: Large ribosomal subunit protein bL17 (125 aa).

Belongs to the bacterial ribosomal protein bL17 family. In terms of assembly, part of the 50S ribosomal subunit. Contacts protein L32.

The sequence is that of Large ribosomal subunit protein bL17 from Blochmanniella floridana.